An 854-amino-acid chain; its full sequence is DNA mismatch repair protein MutS (854 aa).

614–621 (GPNMGGKS) is an ATP binding site.

It belongs to the DNA mismatch repair MutS family.

Its function is as follows. This protein is involved in the repair of mismatches in DNA. It is possible that it carries out the mismatch recognition step. This protein has a weak ATPase activity. This Sodalis glossinidius (strain morsitans) protein is DNA mismatch repair protein MutS.